The following is a 136-amino-acid chain: Orexigenic neuropeptide QRFP (136 aa).

Residues 1 to 18 (MVRPYPLIYFLFLPLGAC) form the signal peptide. The propeptide occupies 19 to 90 (FPLLDRREPT…HAGCRFRFGR (72 aa)). At Q91 the chain carries Pyrrolidone carboxylic acid. F133 carries the phenylalanine amide modification.

Belongs to the RFamide neuropeptide family. In terms of assembly, ligand for the G-protein coupled receptor QRFPR/GPR103. As to expression, expressed widely in the brain with highest expression levels in the cerebellum, medulla, pituitary, retina, vestibular nucleus, and white matter. Also expressed in the bladder, colon, coronary artery, parathyroid gland, prostate, testis, and thyroid.

It localises to the secreted. Stimulates feeding behavior, metabolic rate and locomotor activity and increases blood pressure. May have orexigenic activity. May promote aldosterone secretion by the adrenal gland. The polypeptide is Orexigenic neuropeptide QRFP (Homo sapiens (Human)).